Reading from the N-terminus, the 493-residue chain is Glutamate--tRNA ligase (493 aa).

A 'HIGH' region motif is present at residues 9–19 (PSPTGDPHVGT). Residues 249-253 (KLSKR) carry the 'KMSKS' region motif. Lys252 is an ATP binding site.

The protein belongs to the class-I aminoacyl-tRNA synthetase family. Glutamate--tRNA ligase type 1 subfamily. As to quaternary structure, monomer.

Its subcellular location is the cytoplasm. The catalysed reaction is tRNA(Glu) + L-glutamate + ATP = L-glutamyl-tRNA(Glu) + AMP + diphosphate. Its function is as follows. Catalyzes the attachment of glutamate to tRNA(Glu) in a two-step reaction: glutamate is first activated by ATP to form Glu-AMP and then transferred to the acceptor end of tRNA(Glu). The sequence is that of Glutamate--tRNA ligase from Marinobacter nauticus (strain ATCC 700491 / DSM 11845 / VT8) (Marinobacter aquaeolei).